The sequence spans 246 residues: Probable 2-phosphosulfolactate phosphatase (246 aa).

The protein belongs to the ComB family. Mg(2+) serves as cofactor.

It catalyses the reaction (2R)-O-phospho-3-sulfolactate + H2O = (2R)-3-sulfolactate + phosphate. This is Probable 2-phosphosulfolactate phosphatase from Synechococcus sp. (strain WH7803).